The following is a 415-amino-acid chain: MLAKTDPVINDLIKQEENRQRHNIELIASENIVSGAVQEAQGSVLTNKYAEGYPNKRFYGGCEYIDQIETLAIERAKELFGADHVNVQPHSGSQANMAVYQALLEPGDKILGMNLTDGGHLTHGSPFNFSGQLYDFYSYGVADTNEQLDYASLAAKAQEVHPKMIVAGASAYSRTIDFPRLREIADQVGAYLMIDMAHIAGLVATGVHPSPVPYADVVTTTTHKTLRGPRGGMILCKAEYAKAIDSAIFPGIQGGPLEHVIAAKAVAFGEALQPEFTAYTKQIVANAQAMAAVFDQSDLVRVVSGGTDNHLMLLDLTNSGLNGKELQNLLDSVHITVNKNTIPFEKLSPFKTSGIRIGTPAITSRGFKEKDCEQIANLILEVIEKHDQLEAMTAISEAVLKLTDQFPITQAKFLD.

Residues Leu115 and 119–121 each bind (6S)-5,6,7,8-tetrahydrofolate; that span reads GHL. At Lys224 the chain carries N6-(pyridoxal phosphate)lysine. Position 348–350 (348–350) interacts with (6S)-5,6,7,8-tetrahydrofolate; that stretch reads SPF.

The protein belongs to the SHMT family. As to quaternary structure, homodimer. Pyridoxal 5'-phosphate serves as cofactor.

It localises to the cytoplasm. The catalysed reaction is (6R)-5,10-methylene-5,6,7,8-tetrahydrofolate + glycine + H2O = (6S)-5,6,7,8-tetrahydrofolate + L-serine. The protein operates within one-carbon metabolism; tetrahydrofolate interconversion. It functions in the pathway amino-acid biosynthesis; glycine biosynthesis; glycine from L-serine: step 1/1. Catalyzes the reversible interconversion of serine and glycine with tetrahydrofolate (THF) serving as the one-carbon carrier. This reaction serves as the major source of one-carbon groups required for the biosynthesis of purines, thymidylate, methionine, and other important biomolecules. Also exhibits THF-independent aldolase activity toward beta-hydroxyamino acids, producing glycine and aldehydes, via a retro-aldol mechanism. This Latilactobacillus sakei subsp. sakei (strain 23K) (Lactobacillus sakei subsp. sakei) protein is Serine hydroxymethyltransferase.